The following is a 236-amino-acid chain: LHFPL tetraspan subfamily member 3 protein (236 aa).

A run of 4 helical transmembrane segments spans residues 36–56 (IGVL…VCFI), 110–130 (FFIG…TLFF), 140–160 (ICAW…MIFP), and 191–211 (ILAI…FVLG).

Belongs to the LHFP family.

The protein localises to the membrane. This Homo sapiens (Human) protein is LHFPL tetraspan subfamily member 3 protein.